The following is a 364-amino-acid chain: Cobalt-precorrin-5B C(1)-methyltransferase (364 aa).

This sequence belongs to the CbiD family.

It catalyses the reaction Co-precorrin-5B + S-adenosyl-L-methionine = Co-precorrin-6A + S-adenosyl-L-homocysteine. It functions in the pathway cofactor biosynthesis; adenosylcobalamin biosynthesis; cob(II)yrinate a,c-diamide from sirohydrochlorin (anaerobic route): step 6/10. Its function is as follows. Catalyzes the methylation of C-1 in cobalt-precorrin-5B to form cobalt-precorrin-6A. This chain is Cobalt-precorrin-5B C(1)-methyltransferase, found in Pseudomonas putida (strain GB-1).